Here is a 177-residue protein sequence, read N- to C-terminus: Large ribosomal subunit protein uL6 (177 aa).

This sequence belongs to the universal ribosomal protein uL6 family. As to quaternary structure, part of the 50S ribosomal subunit.

Its function is as follows. This protein binds to the 23S rRNA, and is important in its secondary structure. It is located near the subunit interface in the base of the L7/L12 stalk, and near the tRNA binding site of the peptidyltransferase center. This chain is Large ribosomal subunit protein uL6, found in Idiomarina loihiensis (strain ATCC BAA-735 / DSM 15497 / L2-TR).